The sequence spans 650 residues: Acetyl-coenzyme A synthetase (650 aa).

CoA is bound by residues 191-194, Thr-311, and Asn-335; that span reads RGGR. ATP-binding positions include 387 to 389, 411 to 416, Asp-501, and Arg-516; these read GEP and DTWWQT. Ser-524 is a binding site for CoA. Position 527 (Arg-527) interacts with ATP. Mg(2+)-binding residues include Val-538, His-540, and Ile-543. Residue Arg-585 coordinates CoA. Position 610 is an N6-acetyllysine (Lys-610).

Belongs to the ATP-dependent AMP-binding enzyme family. It depends on Mg(2+) as a cofactor. Post-translationally, acetylated. Deacetylation by the SIR2-homolog deacetylase activates the enzyme.

It carries out the reaction acetate + ATP + CoA = acetyl-CoA + AMP + diphosphate. In terms of biological role, catalyzes the conversion of acetate into acetyl-CoA (AcCoA), an essential intermediate at the junction of anabolic and catabolic pathways. AcsA undergoes a two-step reaction. In the first half reaction, AcsA combines acetate with ATP to form acetyl-adenylate (AcAMP) intermediate. In the second half reaction, it can then transfer the acetyl group from AcAMP to the sulfhydryl group of CoA, forming the product AcCoA. The chain is Acetyl-coenzyme A synthetase from Vibrio parahaemolyticus serotype O3:K6 (strain RIMD 2210633).